A 779-amino-acid chain; its full sequence is Pre-mRNA-splicing factor cef-1 (779 aa).

HTH myb-type domains are found at residues Met1–Ile56 and Lys57–Glu106. DNA-binding regions (H-T-H motif) lie at residues Trp29–Leu52 and Trp80–Leu102. 4 disordered regions span residues Leu113–Arg192, Glu246–Gln284, Thr424–Pro448, and Trp497–Glu525. The span at Ser127–Thr152 shows a compositional bias: basic and acidic residues. The stretch at Glu157–Thr204 forms a coiled coil. Composition is skewed to basic and acidic residues over residues Glu246 to Lys256 and Arg263 to Pro281. Positions Asp653–Gly772 form a coiled coil.

Belongs to the CEF1 family. Associated with the spliceosome.

The protein localises to the cytoplasm. It is found in the nucleus. Involved in pre-mRNA splicing and cell cycle control. The chain is Pre-mRNA-splicing factor cef-1 (cef-1) from Neurospora crassa (strain ATCC 24698 / 74-OR23-1A / CBS 708.71 / DSM 1257 / FGSC 987).